The primary structure comprises 547 residues: CTP synthase (547 aa).

Residues 1–265 (MARYVFITGG…DQAVLDAFGI (265 aa)) form an amidoligase domain region. Residue S13 coordinates CTP. S13 provides a ligand contact to UTP. ATP is bound by residues 14 to 19 (SLGKGL) and D71. Residues D71 and E139 each contribute to the Mg(2+) site. CTP is bound by residues 146 to 148 (DIE), 186 to 191 (KTKPTQ), and K222. Residues 186-191 (KTKPTQ) and K222 each bind UTP. The region spanning 291–546 (RVAIVGKYTQ…VRAAVEVSRL (256 aa)) is the Glutamine amidotransferase type-1 domain. L-glutamine is bound at residue G353. C380 acts as the Nucleophile; for glutamine hydrolysis in catalysis. L-glutamine-binding positions include 381-384 (LGMQ), E404, and R474. Catalysis depends on residues H519 and E521.

The protein belongs to the CTP synthase family. In terms of assembly, homotetramer.

The catalysed reaction is UTP + L-glutamine + ATP + H2O = CTP + L-glutamate + ADP + phosphate + 2 H(+). It carries out the reaction L-glutamine + H2O = L-glutamate + NH4(+). The enzyme catalyses UTP + NH4(+) + ATP = CTP + ADP + phosphate + 2 H(+). The protein operates within pyrimidine metabolism; CTP biosynthesis via de novo pathway; CTP from UDP: step 2/2. Allosterically activated by GTP, when glutamine is the substrate; GTP has no effect on the reaction when ammonia is the substrate. The allosteric effector GTP functions by stabilizing the protein conformation that binds the tetrahedral intermediate(s) formed during glutamine hydrolysis. Inhibited by the product CTP, via allosteric rather than competitive inhibition. Catalyzes the ATP-dependent amination of UTP to CTP with either L-glutamine or ammonia as the source of nitrogen. Regulates intracellular CTP levels through interactions with the four ribonucleotide triphosphates. The sequence is that of CTP synthase from Cereibacter sphaeroides (strain ATCC 17023 / DSM 158 / JCM 6121 / CCUG 31486 / LMG 2827 / NBRC 12203 / NCIMB 8253 / ATH 2.4.1.) (Rhodobacter sphaeroides).